A 227-amino-acid chain; its full sequence is Calcium-binding protein 1 (227 aa).

Glycine 2 carries the N-myristoyl glycine lipid modification. Residue cysteine 4 is the site of S-palmitoyl cysteine attachment. 4 consecutive EF-hand domains span residues 82–117, 136–153, 159–194, and 196–227; these read EEIEELREAFREFDKDKDGYINCRDLGNCMRTMGYM, GHVDFDDFVELMGPKLLA, IGVKELRDAFREFDTNGDGEISTSELREAMRKLLGH, and VGHRDIEEIIRDVDLNGDGRVDFEEFVRMMSR. Ca(2+)-binding residues include aspartate 95, aspartate 97, aspartate 99, tyrosine 101, and aspartate 106. 4 residues coordinate Ca(2+): aspartate 172, asparagine 174, aspartate 176, and glutamate 178. Serine 180 is subject to Phosphoserine. Positions 183, 209, 211, 213, 215, and 220 each coordinate Ca(2+).

As to quaternary structure, homodimer; when bound to calcium or magnesium. Interacts (via C-terminus) with ITPR1, ITPR2 and ITPR3. This binding is calcium dependent and the interaction correlates with calcium concentration. An additional calcium-independent interaction with the N-terminus of ITPR1 results in a decreased InsP(3) binding to the receptor. Interacts with CACNA1A (via C-terminal CDB motif) in the pre- and postsynaptic membranes. Interacts with CACNA1D and CACNA1C (via C-terminal C and IQ motifs). The binding to the C motif is calcium independent whereas the binding to IQ requires the presence of calcium and is mutually exclusive with calmodulin binding. Interacts with TRPC5 (via C-terminus). Interacts (via EF-hands 1 and 2) at microtubules with MAP1LC3B. Interacts with MYO1C. Interacts (via EF-hands 1 and 2) with NSMF (via the central NLS-containing motif region), the interaction occurs in a calcium dependent manner after synaptic NMDA receptor stimulation and prevents nuclear import of NSMF. Interacts with SPACA9 homolog. In terms of processing, phosphorylated. The phosphorylation regulates the activity. In terms of tissue distribution, expressed in the inner retina, specifically in amacrine cells and in cone OFF-bipolar cells (at protein level).

In terms of biological role, modulates calcium-dependent activity of inositol 1,4,5-triphosphate receptors (ITPRs). Inhibits agonist-induced intracellular calcium signaling. Enhances inactivation and does not support calcium-dependent facilitation of voltage-dependent P/Q-type calcium channels. Causes calcium-dependent facilitation and inhibits inactivation of L-type calcium channels by binding to the same sites as calmodulin in the C-terminal domain of CACNA1C, but has an opposite effect on channel function. Suppresses the calcium-dependent inactivation of CACNA1D. Inhibits TRPC5 channels. Prevents NMDA receptor-induced cellular degeneration. Required for the normal transfer of light signals through the retina. This is Calcium-binding protein 1 (Cabp1) from Mus musculus (Mouse).